We begin with the raw amino-acid sequence, 609 residues long: Granule-bound starch synthase 1, chloroplastic/amyloplastic (609 aa).

Residues 1–77 (MSALTTSQLA…SRRFPSVVVY (77 aa)) constitute a chloroplast transit peptide. Positions 29 to 67 (RHGFQGLKPRSPAGGDATSLSVTTSARATPKQQRSVQRG) are disordered. Residues 46–66 (TSLSVTTSARATPKQQRSVQR) show a composition bias toward polar residues. K97 serves as a coordination point for ADP-alpha-D-glucose. ADP contacts are provided by G100, R408, K413, K462, and Q493. Cysteines 337 and 529 form a disulfide.

Belongs to the glycosyltransferase 1 family. Bacterial/plant glycogen synthase subfamily.

The protein resides in the plastid. The protein localises to the chloroplast. Its subcellular location is the amyloplast. The enzyme catalyses an NDP-alpha-D-glucose + [(1-&gt;4)-alpha-D-glucosyl](n) = [(1-&gt;4)-alpha-D-glucosyl](n+1) + a ribonucleoside 5'-diphosphate + H(+). Its pathway is glycan biosynthesis; starch biosynthesis. Its function is as follows. Required for the synthesis of amylose in endosperm. The sequence is that of Granule-bound starch synthase 1, chloroplastic/amyloplastic (WAXY) from Oryza sativa subsp. indica (Rice).